Consider the following 407-residue polypeptide: Aminoacylase-1 (407 aa).

An N-acetylalanine modification is found at Ala2. His80 is a binding site for Zn(2+). The active site involves Asp82. A Zn(2+)-binding site is contributed by Asp113. The active-site Proton acceptor is the Glu147. Residues Glu148, Glu175, and His372 each contribute to the Zn(2+) site.

It belongs to the peptidase M20A family. In terms of assembly, homodimer. Interacts with SPHK1. It depends on Zn(2+) as a cofactor.

It localises to the cytoplasm. The enzyme catalyses an N-acyl-L-amino acid + H2O = an L-alpha-amino acid + a carboxylate. The catalysed reaction is N-acetyl-L-methionine + H2O = L-methionine + acetate. It carries out the reaction N-acetyl-L-glutamine + H2O = L-glutamine + acetate. In terms of biological role, catalyzes the hydrolysis of N-acetylated amino acids to acetate and free amino acids. The chain is Aminoacylase-1 (ACY1) from Sus scrofa (Pig).